We begin with the raw amino-acid sequence, 139 residues long: ATP synthase epsilon chain, chloroplastic (139 aa).

Belongs to the ATPase epsilon chain family. F-type ATPases have 2 components, CF(1) - the catalytic core - and CF(0) - the membrane proton channel. CF(1) has five subunits: alpha(3), beta(3), gamma(1), delta(1), epsilon(1). CF(0) has three main subunits: a, b and c.

Its subcellular location is the plastid. The protein resides in the chloroplast thylakoid membrane. In terms of biological role, produces ATP from ADP in the presence of a proton gradient across the membrane. This Dictyota dichotoma protein is ATP synthase epsilon chain, chloroplastic.